Here is a 1214-residue protein sequence, read N- to C-terminus: Protein argonaute-2 (1214 aa).

Residues Met-1–Lys-412 form a disordered region. 2 stretches are compositionally biased toward low complexity: residues Pro-18–Ser-93 and Lys-107–Gly-117. Composition is skewed to gly residues over residues Gln-118 to Gly-131, Gln-141 to Gly-154, Gln-164 to Gly-177, Gln-187 to Gly-200, Gln-210 to Gly-223, Gln-233 to Gly-246, and Gln-256 to Gly-269. Positions Gly-270–Gly-282 are enriched in low complexity. Gly residues-rich tracts occupy residues Gln-302–Gly-315, Gln-325–Gly-338, and Gln-348–Gly-361. Over residues Gly-362–Pro-394 the composition is skewed to low complexity. The region spanning Leu-608–Glu-717 is the PAZ domain. Positions Tyr-681–Asn-686 are interaction with guide RNA. One can recognise a Piwi domain in the interval Leu-885–Thr-1186. 2 residues coordinate a divalent metal cation: Asp-965 and Asp-1037. Interaction with guide RNA regions lie at residues Lys-1075–Arg-1076, His-1119–Lys-1127, and Phe-1156–Arg-1178. Residue His-1173 coordinates a divalent metal cation.

The protein belongs to the argonaute family. Ago subfamily. Interacts with Fmr1, Dcr-1 and vig to form the RNA-induced silencing complex (RISC), a ribonucleoprotein (RNP) complex involved in translation regulation, other components of the complex are RpL5, RpL11 and Rm62. As part of the RISC complex, interacts with Tudor-SN. Interacts with Taf11. In terms of assembly, (Microbial infection) Interacts with cricket paralysis virus protein 1A; this interaction may block the RISC activity. Mg(2+) serves as cofactor. It depends on Mn(2+) as a cofactor.

The protein localises to the nucleus. It is found in the cytoplasm. The protein resides in the cytoplasmic ribonucleoprotein granule. In terms of biological role, essential for RNA interference (RNAi); double-stranded RNA induces potent and specific gene silencing. RNAi is mediated by the RNA-induced silencing complex (RISC), a sequence-specific, multicomponent nuclease that destroys or silences messenger RNAs homologous to the silencing trigger. This Drosophila melanogaster (Fruit fly) protein is Protein argonaute-2.